The primary structure comprises 94 residues: Large ribosomal subunit protein uL23 (94 aa).

Belongs to the universal ribosomal protein uL23 family. As to quaternary structure, part of the 50S ribosomal subunit. Contacts protein L29, and trigger factor when it is bound to the ribosome.

Functionally, one of the early assembly proteins it binds 23S rRNA. One of the proteins that surrounds the polypeptide exit tunnel on the outside of the ribosome. Forms the main docking site for trigger factor binding to the ribosome. The sequence is that of Large ribosomal subunit protein uL23 from Phytoplasma australiense.